The sequence spans 489 residues: Inactive receptor-like serine/threonine-protein kinase At2g40270 (489 aa).

The first 23 residues, 1–23 (MLFKMRSFVAFVLLLSWFGSCCS), serve as a signal peptide directing secretion. The Extracellular segment spans residues 24-139 (LKDQAVDFLK…PRNSHSSVPL (116 aa)). Residues 67 to 130 (KDLPSRKDRK…SAPLANSPIP (64 aa)) are disordered. Low complexity predominate over residues 81–90 (AATTTPSSSP). A compositionally biased stretch (polar residues) spans 99-116 (TKASTVSEPQKRSSTQDV). Over residues 117–130 (SPSPSAPLANSPIP) the composition is skewed to low complexity. A helical membrane pass occupies residues 140–160 (VVGCVGGAFFLLLVATGLYFF). Residues 161-489 (TSKAGKTVNP…WAELEVLSTA (329 aa)) are Cytoplasmic-facing. The Protein kinase domain occupies 200-460 (EDFSNVIGSC…PTMQEVTGWL (261 aa)).

The protein belongs to the protein kinase superfamily. Ser/Thr protein kinase family.

Its subcellular location is the cell membrane. The chain is Inactive receptor-like serine/threonine-protein kinase At2g40270 from Arabidopsis thaliana (Mouse-ear cress).